The chain runs to 53 residues: Antitoxin RelB3 (53 aa).

As to quaternary structure, forms heterodimers with RelE and possibly a heterotetramer RelE3-RelB3(2)-RelE3 from 2 heterodimers. The heterotetramer is probably not very stable in solution.

Functionally, antitoxin component of a type II toxin-antitoxin (TA) system. Probably neutralizes the toxic activity of cognate toxin RelE. In Methanocaldococcus jannaschii (strain ATCC 43067 / DSM 2661 / JAL-1 / JCM 10045 / NBRC 100440) (Methanococcus jannaschii), this protein is Antitoxin RelB3 (relB3).